The chain runs to 795 residues: Phenylalanine--tRNA ligase beta subunit (795 aa).

A tRNA-binding domain is found at 39 to 148; it reads AGDFSGVVVG…QNAPVGTNLR (110 aa). Residues 401-476 enclose the B5 domain; sequence PKLNQVSLRR…RIYGYNSIPN (76 aa). Mg(2+) is bound by residues Asp-454, Asp-460, Glu-463, and Glu-464. The FDX-ACB domain maps to 701-794; it reads SRFPANRRDL…LKQRFNAYLR (94 aa).

The protein belongs to the phenylalanyl-tRNA synthetase beta subunit family. Type 1 subfamily. Tetramer of two alpha and two beta subunits. Requires Mg(2+) as cofactor.

It localises to the cytoplasm. The catalysed reaction is tRNA(Phe) + L-phenylalanine + ATP = L-phenylalanyl-tRNA(Phe) + AMP + diphosphate + H(+). The polypeptide is Phenylalanine--tRNA ligase beta subunit (pheT) (Pasteurella multocida (strain Pm70)).